We begin with the raw amino-acid sequence, 215 residues long: Octanoyltransferase (215 aa).

Residues 31-206 form the BPL/LPL catalytic domain; it reads PDSQDEIWLV…QLVKHLDYAE (176 aa). Substrate is bound by residues 70–77, 137–139, and 150–152; these read RGGQVTYH, SLG, and GLA. Residue cysteine 168 is the Acyl-thioester intermediate of the active site.

It belongs to the LipB family.

Its subcellular location is the cytoplasm. The enzyme catalyses octanoyl-[ACP] + L-lysyl-[protein] = N(6)-octanoyl-L-lysyl-[protein] + holo-[ACP] + H(+). It participates in protein modification; protein lipoylation via endogenous pathway; protein N(6)-(lipoyl)lysine from octanoyl-[acyl-carrier-protein]: step 1/2. Functionally, catalyzes the transfer of endogenously produced octanoic acid from octanoyl-acyl-carrier-protein onto the lipoyl domains of lipoate-dependent enzymes. Lipoyl-ACP can also act as a substrate although octanoyl-ACP is likely to be the physiological substrate. This is Octanoyltransferase from Pseudomonas putida (strain ATCC 700007 / DSM 6899 / JCM 31910 / BCRC 17059 / LMG 24140 / F1).